We begin with the raw amino-acid sequence, 314 residues long: Oxidoreductase NAD-binding domain-containing protein 1 (314 aa).

The N-terminal stretch at M1–G18 is a signal peptide. The region spanning E63 to Q166 is the FAD-binding FR-type domain. G180–P185 is a binding site for NAD(+).

This Xenopus tropicalis (Western clawed frog) protein is Oxidoreductase NAD-binding domain-containing protein 1 (oxnad1).